The chain runs to 61 residues: MFQISNLLIAADFSAEVANNSAVGMIGSFIAAALLIVVPATAFLIFVSQKDSLDRTSTGRR.

A helical transmembrane segment spans residues 26–46 (IGSFIAAALLIVVPATAFLIF).

It belongs to the PsbX family. Type 2 subfamily. In terms of assembly, PSII consists of a core antenna complex that captures photons, and an electron transfer chain that converts photonic excitation into a charge separation. PSII forms dimeric complexes.

The protein resides in the cellular thylakoid membrane. Its function is as follows. Involved in the binding and/or turnover of quinones at the Q(B) site of Photosystem II. This chain is Photosystem II reaction center X protein, found in Prochlorococcus marinus (strain AS9601).